The following is a 579-amino-acid chain: Nuclear hormone receptor family member nhr-71 (579 aa).

A DNA-binding region (nuclear receptor) is located at residues 8 to 83; sequence SQECMVCSAP…AGMKIGAVQP (76 aa). NR C4-type zinc fingers lie at residues 11–31 and 47–71; these read CMVC…CRSC and CKHT…FTKC. Disordered stretches follow at residues 82–124 and 168–189; these read QPRR…SDGP and EPIP…PNDD. 2 stretches are compositionally biased toward polar residues: residues 106–124 and 171–186; these read SMNN…SDGP and PSTS…QSSP. Positions 189 to 452 constitute an NR LBD domain; that stretch reads DEQQEFNHLV…KFWYETLCYA (264 aa).

The protein belongs to the nuclear hormone receptor family.

It localises to the nucleus. Its function is as follows. Orphan nuclear receptor. In Caenorhabditis elegans, this protein is Nuclear hormone receptor family member nhr-71 (nhr-71).